A 312-amino-acid polypeptide reads, in one-letter code: HPr kinase/phosphorylase (312 aa).

Catalysis depends on residues His141 and Lys162. 156 to 163 is an ATP binding site; the sequence is GDSGIGKS. Residue Ser163 participates in Mg(2+) binding. Asp180 serves as the catalytic Proton acceptor; for phosphorylation activity. Proton donor; for dephosphorylation activity. The important for the catalytic mechanism of both phosphorylation and dephosphorylation stretch occupies residues 204-213; that stretch reads LEIRGVGIID. Glu205 contacts Mg(2+). Arg246 is a catalytic residue. Positions 267–272 are important for the catalytic mechanism of dephosphorylation; it reads PVRVGR.

Belongs to the HPrK/P family. As to quaternary structure, homohexamer. The cofactor is Mg(2+).

It carries out the reaction [HPr protein]-L-serine + ATP = [HPr protein]-O-phospho-L-serine + ADP + H(+). It catalyses the reaction [HPr protein]-O-phospho-L-serine + phosphate + H(+) = [HPr protein]-L-serine + diphosphate. In terms of biological role, catalyzes the ATP- as well as the pyrophosphate-dependent phosphorylation of a specific serine residue in HPr, a phosphocarrier protein of the phosphoenolpyruvate-dependent sugar phosphotransferase system (PTS). HprK/P also catalyzes the pyrophosphate-producing, inorganic phosphate-dependent dephosphorylation (phosphorolysis) of seryl-phosphorylated HPr (P-Ser-HPr). The two antagonistic activities of HprK/P are regulated by several intracellular metabolites, which change their concentration in response to the absence or presence of rapidly metabolisable carbon sources (glucose, fructose, etc.) in the growth medium. Therefore, by controlling the phosphorylation state of HPr, HPrK/P is a sensor enzyme that plays a major role in the regulation of carbon metabolism and sugar transport: it mediates carbon catabolite repression (CCR), and regulates PTS-catalyzed carbohydrate uptake and inducer exclusion. The sequence is that of HPr kinase/phosphorylase from Pediococcus pentosaceus (strain ATCC 25745 / CCUG 21536 / LMG 10740 / 183-1w).